The primary structure comprises 289 residues: Protease HtpX (289 aa).

2 consecutive transmembrane segments (helical) span residues 4-24 and 36-56; these read IMLF…VLNI and LSGL…ISLM. Position 143 (histidine 143) interacts with Zn(2+). Residue glutamate 144 is part of the active site. Zn(2+) is bound at residue histidine 147. Helical transmembrane passes span 158–178 and 192–212; these read LMQG…ANIV and MVYF…ASFL. Residue glutamate 221 participates in Zn(2+) binding.

The protein belongs to the peptidase M48B family. Zn(2+) serves as cofactor.

Its subcellular location is the cell inner membrane. The chain is Protease HtpX from Vibrio campbellii (strain ATCC BAA-1116).